Here is a 178-residue protein sequence, read N- to C-terminus: uncharacterized protein (178 aa).

The disordered stretch occupies residues lysine 152–asparagine 178.

This sequence belongs to the EUO family.

This is an uncharacterized protein from Chlamydia pneumoniae (Chlamydophila pneumoniae).